We begin with the raw amino-acid sequence, 401 residues long: Elongation factor Tu 1 (401 aa).

Residues 10 to 209 (KPHVNVGTIG…AVDEYIPTPV (200 aa)) enclose the tr-type G domain. A G1 region spans residues 19–26 (GHVDHGKT). GTP is bound at residue 19–26 (GHVDHGKT). A Mg(2+)-binding site is contributed by Thr26. Positions 60–64 (GITIA) are G2. The interval 81-84 (DCPG) is G3. Residues 81–85 (DCPGH) and 136–139 (NKVD) contribute to the GTP site. Residues 136–139 (NKVD) form a G4 region. The interval 174–176 (SAL) is G5.

Belongs to the TRAFAC class translation factor GTPase superfamily. Classic translation factor GTPase family. EF-Tu/EF-1A subfamily. In terms of assembly, monomer.

The protein resides in the cytoplasm. It catalyses the reaction GTP + H2O = GDP + phosphate + H(+). In terms of biological role, GTP hydrolase that promotes the GTP-dependent binding of aminoacyl-tRNA to the A-site of ribosomes during protein biosynthesis. This Roseiflexus sp. (strain RS-1) protein is Elongation factor Tu 1.